The following is a 317-amino-acid chain: MTTALDQLKQYTTVVADTGDFQQLAQYKPQDATTNPSLILKAVQKDDYKPLLEKTVKAHASKPVGAIIDQLLIAFGTEILKIIPGRVSTEVDARLSFDTEASIAKGRELIALYKEHGIGRERVLIKLASTWEGVRAAEVLQKEGIHCNMTLLFSLAQAAACAEAGAQLISPFVGRIYDWYKKNAGSAWDEAKDGGANDPGVKSVRRIYAYYKKFGYKTEVMGASFRTPGQILELAGCDLLTISPDLLQKLQESTEKVERKLSPDSAKDADIERVPVDEASFRFLVNDEAMATEKLAEGIRAFAADAVKLEKLIEALR.

Lys-126 serves as the catalytic Schiff-base intermediate with substrate.

It belongs to the transaldolase family. Type 1 subfamily. Homodimer.

The protein localises to the cytoplasm. It catalyses the reaction D-sedoheptulose 7-phosphate + D-glyceraldehyde 3-phosphate = D-erythrose 4-phosphate + beta-D-fructose 6-phosphate. It participates in carbohydrate degradation; pentose phosphate pathway; D-glyceraldehyde 3-phosphate and beta-D-fructose 6-phosphate from D-ribose 5-phosphate and D-xylulose 5-phosphate (non-oxidative stage): step 2/3. In terms of biological role, transaldolase is important for the balance of metabolites in the pentose-phosphate pathway. This is Transaldolase from Paraburkholderia phytofirmans (strain DSM 17436 / LMG 22146 / PsJN) (Burkholderia phytofirmans).